The chain runs to 380 residues: Palmitoyltransferase ZDHHC20 (380 aa).

The Cytoplasmic portion of the chain corresponds to 1–14; that stretch reads MAPWTLWRCCQRVV. A helical transmembrane segment spans residues 15 to 35; sequence GWVPVLFITFVVVWSYYAYVV. Over 36 to 53 the chain is Lumenal; it reads ELCVSTISRTGEKGKTVV. A helical transmembrane segment spans residues 54 to 74; it reads YLVAFHLFFVMFVWSYWMTIF. Residues 75–169 lie on the Cytoplasmic side of the membrane; sequence TSPASPSKEF…NNCVGFTNYK (95 aa). The DHHC domain occupies 126–176; the sequence is RYCEKCQLIKPDRAHHCSACDRCVLKMDHHCPWVNNCVGFTNYKFFMLFLL. Zn(2+) is bound by residues Cys-128 and Cys-131. Substrate-binding positions include Lys-135 and 140–143; that span reads HHCS. Zn(2+)-binding residues include His-141, Cys-142, Cys-145, Cys-148, and His-155. Residue Cys-156 is the S-palmitoyl cysteine intermediate of the active site. A Zn(2+)-binding site is contributed by Cys-162. The chain crosses the membrane as a helical span at residues 170–190; that stretch reads FFMLFLLYSLLYCLFVAATVL. Residues 191–222 are Lumenal-facing; that stretch reads EYFIKFWTLCRRKSTENCPKNEPTVLNFPSAK. Residues 223-246 traverse the membrane as a helical segment; the sequence is FHVLFLFFVSAMFFVSVLSLFSYH. The Cytoplasmic portion of the chain corresponds to 247-380; it reads CWLVGKNRTT…NNHVTVEIEN (134 aa). 3 positions are modified to phosphoserine: Ser-320, Ser-345, and Ser-354.

This sequence belongs to the DHHC palmitoyltransferase family. In terms of processing, autopalmitoylated (in vitro). As to expression, highest levels in lung.

It is found in the golgi apparatus membrane. Its subcellular location is the cell membrane. The protein localises to the cytoplasm. The protein resides in the perinuclear region. It localises to the endoplasmic reticulum membrane. It is found in the endoplasmic reticulum-Golgi intermediate compartment membrane. The catalysed reaction is L-cysteinyl-[protein] + hexadecanoyl-CoA = S-hexadecanoyl-L-cysteinyl-[protein] + CoA. It carries out the reaction L-cysteinyl-[protein] + tetradecanoyl-CoA = S-tetradecanoyl-L-cysteinyl-[protein] + CoA. The enzyme catalyses L-cysteinyl-[protein] + octadecanoyl-CoA = S-octadecanoyl-L-cysteinyl-[protein] + CoA. Functionally, palmitoyltransferase that could catalyze the addition of palmitate onto various protein substrates. Catalyzes palmitoylation of Cys residues in the cytoplasmic C-terminus of EGFR, and modulates the duration of EGFR signaling by modulating palmitoylation-dependent EGFR internalization and degradation. Has a preference for acyl-CoA with C16 fatty acid chains. Can also utilize acyl-CoA with C14 and C18 fatty acid chains. May palmitoylate CALHM1 subunit of gustatory voltage-gated ion channels and modulate channel gating and kinetics. In Mus musculus (Mouse), this protein is Palmitoyltransferase ZDHHC20.